A 235-amino-acid chain; its full sequence is Carbohydrate deacetylase (235 aa).

The Mg(2+) site is built by histidine 61 and histidine 124.

Belongs to the YdjC deacetylase family. Mg(2+) is required as a cofactor.

Functionally, probably catalyzes the deacetylation of acetylated carbohydrates an important step in the degradation of oligosaccharides. This Bacillus cereus (strain 03BB102) protein is Carbohydrate deacetylase.